Consider the following 508-residue polypeptide: Glycerol kinase (508 aa).

Thr-14 serves as a coordination point for ADP. ATP is bound by residues Thr-14, Thr-15, and Ser-16. Thr-14 lines the sn-glycerol 3-phosphate pocket. Arg-18 contacts ADP. Positions 84, 85, and 136 each coordinate sn-glycerol 3-phosphate. Glycerol contacts are provided by Arg-84, Glu-85, and Tyr-136. A Phosphohistidine; by HPr modification is found at His-232. A sn-glycerol 3-phosphate-binding site is contributed by Asp-246. Asp-246 and Gln-247 together coordinate glycerol. ADP-binding residues include Thr-268 and Gly-311. ATP-binding residues include Thr-268, Gly-311, Gln-315, and Gly-412. ADP contacts are provided by Gly-412 and Asn-416.

This sequence belongs to the FGGY kinase family. In terms of assembly, homotetramer and homodimer (in equilibrium). In terms of processing, the phosphoenolpyruvate-dependent sugar phosphotransferase system (PTS), including enzyme I, and histidine-containing protein (HPr) are required for the phosphorylation, which leads to the activation of the enzyme.

It carries out the reaction glycerol + ATP = sn-glycerol 3-phosphate + ADP + H(+). Its pathway is polyol metabolism; glycerol degradation via glycerol kinase pathway; sn-glycerol 3-phosphate from glycerol: step 1/1. Its activity is regulated as follows. Activated by phosphorylation and inhibited by fructose 1,6-bisphosphate (FBP). Key enzyme in the regulation of glycerol uptake and metabolism. Catalyzes the phosphorylation of glycerol to yield sn-glycerol 3-phosphate. In Streptococcus pyogenes serotype M18 (strain MGAS8232), this protein is Glycerol kinase.